Here is a 1020-residue protein sequence, read N- to C-terminus: Sodium/potassium-transporting ATPase subunit alpha-2 (1020 aa).

Residues 1–5 constitute a propeptide that is removed on maturation; it reads MGRGA. Positions 1 to 31 are disordered; sequence MGRGAGREYSPAATTAENGGGKKKQKEKELD. The Cytoplasmic segment spans residues 6 to 85; that stretch reads GREYSPAATT…NALTPPPTTP (80 aa). Residue serine 10 is modified to Phosphoserine. The interval 80–82 is interaction with phosphoinositide-3 kinase; it reads PPP. Residues 86-106 form a helical membrane-spanning segment; the sequence is EWVKFCRQLFGGFSILLWIGA. Over 107-129 the chain is Extracellular; that stretch reads ILCFLAYGIQAAMEDEPSNDNLY. The chain crosses the membrane as a helical span at residues 130–150; it reads LGVVLAAVVIVTGCFSYYQEA. Residues 151–286 lie on the Cytoplasmic side of the membrane; it reads KSSKIMDSFK…VGRTPIAMEI (136 aa). Polar residues predominate over residues 212-227; sequence DNSSLTGESEPQTRSP. The segment at 212–231 is disordered; that stretch reads DNSSLTGESEPQTRSPEFTH. Residues 287-306 form a helical membrane-spanning segment; it reads EHFIQLITGVAVFLGVSFFV. At 307–318 the chain is on the extracellular side; the sequence is LSLILGYSWLEA. Residues 319–336 traverse the membrane as a helical segment; it reads VIFLIGIIVANVPEGLLA. Residues 337-769 lie on the Cytoplasmic side of the membrane; sequence TVTVCLTLTA…EEGRLIFDNL (433 aa). The active-site 4-aspartylphosphate intermediate is the aspartate 374. A phosphoserine mark is found at serine 439, serine 450, and serine 559. Threonine 570 bears the Phosphothreonine mark. Phosphoserine is present on residues serine 587 and serine 672. Residues aspartate 714 and aspartate 718 each coordinate Mg(2+). The chain crosses the membrane as a helical span at residues 770–789; it reads KKSIAYTLTSNIPEITPFLL. Topologically, residues 790-799 are extracellular; it reads FIIANIPLPL. The helical transmembrane segment at 800–820 threads the bilayer; the sequence is GTVTILCIDLGTDMVPAISLA. The Cytoplasmic portion of the chain corresponds to 821–840; it reads YEAAESDIMKRQPRNPQTDK. Phosphoserine is present on serine 826. Residues 841-863 form a helical membrane-spanning segment; sequence LVNERLISMAYGQIGMIQALGGF. The Extracellular portion of the chain corresponds to 864-915; the sequence is FTYFVILAENGFLPSRLLGIRLDWDDRSMNDLEDSYGQEWTYEQRKVVEFTC. Residues 916–935 traverse the membrane as a helical segment; it reads HTAFFASIVVVQWADLIICK. Over 936–948 the chain is Cytoplasmic; that stretch reads TRRNSVFQQGMKN. Residue serine 940 is modified to Phosphoserine; by PKA. A helical transmembrane segment spans residues 949–967; sequence KILIFGLLEETALAAFLSY. The Extracellular segment spans residues 968 to 982; that stretch reads CPGMGVALRMYPLKV. A helical membrane pass occupies residues 983–1003; the sequence is TWWFCAFPYSLLIFIYDEVRK. The Cytoplasmic segment spans residues 1004 to 1020; sequence LILRRYPGGWVEKETYY.

This sequence belongs to the cation transport ATPase (P-type) (TC 3.A.3) family. Type IIC subfamily. As to quaternary structure, the sodium/potassium-transporting ATPase is composed of a catalytic alpha subunit, an auxiliary non-catalytic beta subunit and an additional regulatory subunit. Interacts with regulatory subunit FXYD1.

The protein localises to the membrane. It is found in the cell membrane. It catalyses the reaction K(+)(out) + Na(+)(in) + ATP + H2O = K(+)(in) + Na(+)(out) + ADP + phosphate + H(+). Its function is as follows. This is the catalytic component of the active enzyme, which catalyzes the hydrolysis of ATP coupled with the exchange of sodium and potassium ions across the plasma membrane. This action creates the electrochemical gradient of sodium and potassium, providing the energy for active transport of various nutrients. This Sus scrofa (Pig) protein is Sodium/potassium-transporting ATPase subunit alpha-2 (ATP1A2).